Reading from the N-terminus, the 447-residue chain is MEIEKIQETIRMIADENLDVRTITMGISLLDCIDSDSDRACQKIYDKITTKAQDLVKVGRQIEAEFGLPIVNKRVTVTPIALIAAASGDADYVKYAKTLDRAAHAVGIDFIGGFSALTQKGYQSGDRVLINSLPQALAETELVCASVNVGSTRSGINMDAVKDMGTVIKRASELDLMANAKLVVFCNAVEDNPFMAGGFHGVSEPDVVINAGVSGPGVVKAALEKVKGQPMDVVAETIKQTAFKVTRMGQLVGTIAAQRLGVPFGIVDLSLAPTPAIGDSVAQILEEIGLEQVGTHGTTAALAMLNDAVKKGGIMACSHVGGLSGAFIPVSEDAGMIDAVNAHTLSLDKLEAMTAVCSVGLDMIAIPGDTPAETISAMIADEAAIGMINNKTTAVRVIPVAGKQVGETVEFGGLLGHAPIMGVNKASSAAMIHRGGQLPAPVHSFKN.

Belongs to the UPF0210 family. As to quaternary structure, homodimer.

In Limosilactobacillus fermentum (strain NBRC 3956 / LMG 18251) (Lactobacillus fermentum), this protein is UPF0210 protein LAF_0976.